Reading from the N-terminus, the 505-residue chain is Zealexin A1 synthase (505 aa).

Residues 7 to 26 (IAVGTVAVVAVLSKLKSAVT) form a helical membrane-spanning segment. Cysteine 442 lines the heme pocket.

This sequence belongs to the cytochrome P450 family. Requires heme as cofactor.

The protein resides in the membrane. It carries out the reaction (S)-beta-macrocarpene + 3 reduced [NADPH--hemoprotein reductase] + 3 O2 = zealexin A1 + 3 oxidized [NADPH--hemoprotein reductase] + 4 H2O + 4 H(+). Involved in production of the antifungal phytoalexin zealexin A1. The enzyme sequentially oxidizes(S)-beta-macrocarpene via alcohol and aldehyde intermediates to form zealexin A1, a maize phytoalexin that provides biochemical protection against fungal infection. In Zea mays (Maize), this protein is Zealexin A1 synthase.